The sequence spans 3084 residues: Highly reducing polyketide synthase sdnO (3084 aa).

A Ketosynthase family 3 (KS3) domain is found at 4–430 (PIPLAVVGIA…GTNAHAVLEK (427 aa)). Catalysis depends on for beta-ketoacyl synthase activity residues Cys-178, His-313, and His-353. The malonyl-CoA:ACP transacylase (MAT) domain stretch occupies residues 541–841 (FIFTGQGAQW…LAGPLRQSVA (301 aa)). Catalysis depends on Ser-632, which acts as the For malonyltransferase activity. An N-terminal hotdog fold region spans residues 931-1071 (HDLLGLRMTD…GSVLIDLVSS (141 aa)). The interval 931 to 1243 (HDLLGLRMTD…RSAEADMLVF (313 aa)) is dehydratase (DH) domain. Residues 931–1275 (HDLLGLRMTD…LRSLAALDGA (345 aa)) enclose the PKS/mFAS DH domain. The active-site Proton acceptor; for dehydratase activity is the His-963. The C-terminal hotdog fold stretch occupies residues 1099–1275 (LQPGEDIPPS…LRSLAALDGA (177 aa)). Residue Asp-1177 is the Proton donor; for dehydratase activity of the active site. The tract at residues 1733 to 2045 (GTAHAATFVE…RHENMTKYVV (313 aa)) is enoylreductase (ER) domain. Residues 2069-2252 (ATYVVAGGLG…YMALNIGLIE (184 aa)) form a catalytic ketoreductase (KRc) domain region. Residues 2363-2440 (DIEAFAARAI…ALARKVTLRS (78 aa)) form the Carrier domain. Ser-2400 is modified (O-(pantetheine 4'-phosphoryl)serine). The tract at residues 2445-2501 (GGAGGDASSTGNSESMARTPSDSSTVPTSIPATPSRSPSREPPAKETLTKSQQHLPI) is disordered. The segment covering 2456 to 2481 (NSESMARTPSDSSTVPTSIPATPSRS) has biased composition (polar residues). The span at 2482-2492 (PSREPPAKETL) shows a compositional bias: basic and acidic residues. The interval 2864–3084 (HFYSQLNRAF…LGVVRRVVEG (221 aa)) is choline/carnitine acyltransferase domain.

The protein operates within antibiotic biosynthesis. Its function is as follows. Highly reducing polyketide synthase; part of the gene cluster that mediates the biosynthesis of sordarin and hypoxysordarin, glycoside antibiotics with a unique tetracyclic diterpene aglycone structure. First, the geranylgeranyl diphosphate synthase sdnC constructs GGDP from farnesyl diphosphate and isopentenyl diphosphate. The diterpene cyclase sdnA then catalyzes the cyclization of GGDP to afford cycloaraneosene. Cycloaraneosene is then hydroxylated four times by the putative cytochrome P450 monooxygenases sdnB, sdnE, sdnF and sdnH to give a hydroxylated cycloaraneosene derivative such as cycloaraneosene-8,9,13,19-tetraol. Although the order of the hydroxylations is unclear, at least C8, C9 and C13 of the cycloaraneosene skeleton are hydroxylated before the sordaricin formation. Dehydration of the 13-hydroxy group of the hydroxylated cycloaraneosene derivative might be catalyzed by an unassigned hypothetical protein such as sdnG and sdnP to construct the cyclopentadiene moiety. The FAD-dependent oxidoreductase sdnN is proposed to catalyze the oxidation at C9 of the hydroxylated cycloaraneosene derivative and also catalyze the Baeyer-Villiger oxidation to give the lactone intermediate. The presumed lactone intermediate would be hydrolyzed to give an acrolein moiety and a carboxylate moiety. Then, [4+2]cycloaddition would occur between the acrolein moiety and the cyclopentadiene moiety to give sordaricin. SdnN might also be involved in the [4+2]cycloaddition after the hypothesized oxidation to accommodate the oxidized product and prompt the [4+2]cycloaddition. GDP-6-deoxy-D-altrose may be biosynthesized from GDP-D-mannose by the putative GDP-mannose-4,6-dehydratase sdnI and the short-chain dehydrogenase sdnK. The glycosyltransferase sdnJ catalyzes the attachment of 6-deoxy-D-altrose onto the 19-hydroxy group of sordaricin to give 4'-O-demethylsordarin. The methyltransferase sdnD would complete the biosynthesis of sordarin. Sordarin can be further modified into hypoxysordarin. The unique acyl chain at the 3'-hydroxy group of hypoxysordarin would be constructed by an iterative type I PKS sdnO and the trans-acting polyketide methyltransferase sdnL. SdnL would be responsible for the introduction of an alpha-methyl group of the polyketide chain. Alternatively, the putative beta-lactamase-like sdnR might be responsible for the cleavage and transfer of the polyketide chain from the PKS sdnO to sordarin. Two putative cytochrome P450 monooxygenases, sdnQ and sdnT, might catalyze the epoxidations of the polyketide chain to complete the biosynthesis of hypoxysordarin. Transcriptional regulators sdnM and sdnS are presumably encoded for the transcriptional regulation of the expression of the sdn gene cluster. This Sordaria araneosa (Pleurage araneosa) protein is Highly reducing polyketide synthase sdnO.